The chain runs to 98 residues: Small ribosomal subunit protein uS17 (98 aa).

Belongs to the universal ribosomal protein uS17 family. In terms of assembly, part of the 30S ribosomal subunit.

One of the primary rRNA binding proteins, it binds specifically to the 5'-end of 16S ribosomal RNA. In Mesomycoplasma hyopneumoniae (strain 232) (Mycoplasma hyopneumoniae), this protein is Small ribosomal subunit protein uS17.